The following is a 1086-amino-acid chain: Lon protease homolog, mitochondrial (1086 aa).

The transit peptide at 1-55 (MLRTSCTSSLRRVVGKYVVSPLVASQIRFATSSVRSQPYLLNSELTELPAQFKRY) directs the protein to the mitochondrion. Residues 61–176 (TEKPEGDVPE…EPNEIVTNAG (116 aa)) form a disordered region. Positions 69–83 (PESGPEPSGESGISE) are enriched in low complexity. Over residues 85 to 120 (SNVENDKHDGNDEIKPEAEKNEKDEIEKPEIDKDAI) the composition is skewed to basic and acidic residues. The span at 124–163 (DGVSESSVENVSGSSSAAGGASAPPSGNSNNNNNNNNNNN) shows a compositional bias: low complexity. In terms of domain architecture, Lon N-terminal spans 183–406 (LLAIPMKDRP…KALELLKVEL (224 aa)). ATP is bound at residue 558-565 (GPPGTGKT). Basic and acidic residues-rich tracts occupy residues 767 to 782 (EARE…EAKS) and 815 to 827 (KVDE…SEEL). Disordered stretches follow at residues 767–788 (EARE…ITGS) and 800–835 (KAQS…EEEE). Positions 871 to 1059 (IPPPGVATGL…QDVFDEIFPN (189 aa)) constitute a Lon proteolytic domain. Active-site residues include serine 965 and lysine 1008.

Belongs to the peptidase S16 family. As to quaternary structure, homohexamer or homoheptamer. Organized in a ring with a central cavity.

The protein resides in the mitochondrion matrix. It carries out the reaction Hydrolysis of proteins in presence of ATP.. Its function is as follows. ATP-dependent serine protease that mediates the selective degradation of misfolded, unassembled or oxidatively damaged polypeptides as well as certain short-lived regulatory proteins in the mitochondrial matrix. May also have a chaperone function in the assembly of inner membrane protein complexes. Participates in the regulation of mitochondrial gene expression and in the maintenance of the integrity of the mitochondrial genome. Binds to mitochondrial DNA in a site-specific manner. This is Lon protease homolog, mitochondrial from Scheffersomyces stipitis (strain ATCC 58785 / CBS 6054 / NBRC 10063 / NRRL Y-11545) (Yeast).